Consider the following 199-residue polypeptide: Probable GTP-binding protein EngB (199 aa).

An EngB-type G domain is found at 22 to 195 (QLPEIALSGR…WEWIEQQCDI (174 aa)). GTP-binding positions include 30-37 (GRSNVGKS), 57-61 (GKTQT), 75-78 (DVPG), 142-145 (TKMD), and 174-176 (FSA). Serine 37 and threonine 59 together coordinate Mg(2+).

Belongs to the TRAFAC class TrmE-Era-EngA-EngB-Septin-like GTPase superfamily. EngB GTPase family. The cofactor is Mg(2+).

Necessary for normal cell division and for the maintenance of normal septation. This is Probable GTP-binding protein EngB from Latilactobacillus sakei subsp. sakei (strain 23K) (Lactobacillus sakei subsp. sakei).